The chain runs to 21 residues: Venom peptide Tv1 (21 aa).

3 cysteine pairs are disulfide-bonded: C4–C20, C5–C21, and C7–C16.

As to expression, expressed by the salivary gland. This peptide is considered as a venom peptide.

Its subcellular location is the secreted. Its function is as follows. Injections of 20 uM of this synthetic peptide (Ile) causes partial paralysis to polychaete worms (Nereis virens), the natural prey of terebrid snails. This paralysis may be due to an inhibition of nicotinic receptors at the neuromuscular junction. This is Venom peptide Tv1 from Terebra variegata (Variegate auger snail).